The following is a 332-amino-acid chain: GDP-mannose transporter 2 (332 aa).

Topologically, residues 1-12 are cytoplasmic; it reads MSSLKVSQQDKK. The helical transmembrane segment at 13–33 threads the bilayer; that stretch reads WVNSGSVAILAYCASSILMTI. Over 34–47 the chain is Lumenal; the sequence is TNKVVMSDRTFNMN. A helical transmembrane segment spans residues 48–68; it reads FLLLFIQSLVCVITLLVLKVL. The Cytoplasmic segment spans residues 69 to 84; that stretch reads GSVNFRSFNKTDARNW. A helical membrane pass occupies residues 85-105; it reads FPISICLVLMIFTSSKSLQYL. Residues 106–108 are Lumenal-facing; that stretch reads SVP. Residues 109 to 129 traverse the membrane as a helical segment; that stretch reads VYTIFKNLTIIVIAYGEVLFF. Residues 130–131 lie on the Cytoplasmic side of the membrane; the sequence is GS. A helical membrane pass occupies residues 132 to 152; it reads SVGNMELGSFALMIVSSLIAA. Residues 153–174 lie on the Lumenal side of the membrane; sequence HGDYLHSVERLKKMLGPNVSFS. An N-linked (GlcNAc...) asparagine glycan is attached at N170. The chain crosses the membrane as a helical span at residues 175–195; that stretch reads FIVNIGYFWIAANCFASALFV. Residues 196–211 are Cytoplasmic-facing; it reads LLMRKRIQVTNFKDFD. The chain crosses the membrane as a helical span at residues 212–232; sequence TMFYNNVLSLPLLLLGSYLFE. Residues 233–248 are Lumenal-facing; it reads DWSQENLLPHVDIDNL. N247 is a glycosylation site (N-linked (GlcNAc...) asparagine). A helical transmembrane segment spans residues 249–269; sequence STMIISGLASVAISYCSGWCV. The Cytoplasmic portion of the chain corresponds to 270 to 274; sequence RVTSS. A helical transmembrane segment spans residues 275 to 295; the sequence is TTYSMVGALNKLPIALTGFLF. Topologically, residues 296 to 300 are lumenal; it reads NDAAR. Residues 301–321 traverse the membrane as a helical segment; sequence NLSSAASILLGFASGIIYAVA. The Cytoplasmic portion of the chain corresponds to 322-332; sequence KQKKLQNSEKI.

The protein belongs to the TPT transporter family. SLC35D subfamily. In terms of assembly, homooligomer.

It is found in the golgi apparatus membrane. The protein resides in the cytoplasmic vesicle membrane. It localises to the endoplasmic reticulum membrane. In terms of biological role, involved in the import of GDP-mannose from the cytoplasm into the Golgi lumen. The protein is GDP-mannose transporter 2 (VRG4-2) of Vanderwaltozyma polyspora (strain ATCC 22028 / DSM 70294 / BCRC 21397 / CBS 2163 / NBRC 10782 / NRRL Y-8283 / UCD 57-17) (Kluyveromyces polysporus).